A 281-amino-acid polypeptide reads, in one-letter code: ATP phosphoribosyltransferase (281 aa).

Belongs to the ATP phosphoribosyltransferase family. Long subfamily. Requires Mg(2+) as cofactor.

The protein resides in the cytoplasm. The enzyme catalyses 1-(5-phospho-beta-D-ribosyl)-ATP + diphosphate = 5-phospho-alpha-D-ribose 1-diphosphate + ATP. It functions in the pathway amino-acid biosynthesis; L-histidine biosynthesis; L-histidine from 5-phospho-alpha-D-ribose 1-diphosphate: step 1/9. Feedback inhibited by histidine. Catalyzes the condensation of ATP and 5-phosphoribose 1-diphosphate to form N'-(5'-phosphoribosyl)-ATP (PR-ATP). Has a crucial role in the pathway because the rate of histidine biosynthesis seems to be controlled primarily by regulation of HisG enzymatic activity. This Salinispora tropica (strain ATCC BAA-916 / DSM 44818 / JCM 13857 / NBRC 105044 / CNB-440) protein is ATP phosphoribosyltransferase.